A 206-amino-acid polypeptide reads, in one-letter code: Small ribosomal subunit protein uS4 (206 aa).

A disordered region spans residues 18–46; the sequence is NIWGRPKSPVNRREYGPGQHGQRRKGKIS. The 61-residue stretch at 94 to 154 folds into the S4 RNA-binding domain; that stretch reads RRLDAVVYRA…DRSKQMVALI (61 aa).

Belongs to the universal ribosomal protein uS4 family. In terms of assembly, part of the 30S ribosomal subunit. Contacts protein S5. The interaction surface between S4 and S5 is involved in control of translational fidelity.

Its function is as follows. One of the primary rRNA binding proteins, it binds directly to 16S rRNA where it nucleates assembly of the body of the 30S subunit. In terms of biological role, with S5 and S12 plays an important role in translational accuracy. The polypeptide is Small ribosomal subunit protein uS4 (Roseobacter denitrificans (strain ATCC 33942 / OCh 114) (Erythrobacter sp. (strain OCh 114))).